The sequence spans 167 residues: Large ribosomal subunit protein bL9 (167 aa).

Belongs to the bacterial ribosomal protein bL9 family.

In terms of biological role, binds to the 23S rRNA. This is Large ribosomal subunit protein bL9 from Nitratidesulfovibrio vulgaris (strain DSM 19637 / Miyazaki F) (Desulfovibrio vulgaris).